The following is a 367-amino-acid chain: Phosphoribosylaminoimidazole-succinocarboxamide synthase (367 aa).

It belongs to the SAICAR synthetase family.

It catalyses the reaction 5-amino-1-(5-phospho-D-ribosyl)imidazole-4-carboxylate + L-aspartate + ATP = (2S)-2-[5-amino-1-(5-phospho-beta-D-ribosyl)imidazole-4-carboxamido]succinate + ADP + phosphate + 2 H(+). The protein operates within purine metabolism; IMP biosynthesis via de novo pathway; 5-amino-1-(5-phospho-D-ribosyl)imidazole-4-carboxamide from 5-amino-1-(5-phospho-D-ribosyl)imidazole-4-carboxylate: step 1/2. The chain is Phosphoribosylaminoimidazole-succinocarboxamide synthase from Shewanella sp. (strain ANA-3).